Here is a 411-residue protein sequence, read N- to C-terminus: 2,3-bisphosphoglycerate-independent phosphoglycerate mutase (411 aa).

It belongs to the BPG-independent phosphoglycerate mutase family. A-PGAM subfamily.

It carries out the reaction (2R)-2-phosphoglycerate = (2R)-3-phosphoglycerate. It participates in carbohydrate degradation; glycolysis; pyruvate from D-glyceraldehyde 3-phosphate: step 3/5. Functionally, catalyzes the interconversion of 2-phosphoglycerate and 3-phosphoglycerate. In Thermococcus gammatolerans (strain DSM 15229 / JCM 11827 / EJ3), this protein is 2,3-bisphosphoglycerate-independent phosphoglycerate mutase.